The primary structure comprises 456 residues: Anthocyanidin 3-O-galactosyltransferase F3GT1 (456 aa).

Ser-20, His-22, and Gln-83 together coordinate an anthocyanidin. The active-site Proton acceptor is the His-22. The Charge relay role is filled by Asp-118. His-150 is a binding site for an anthocyanidin. UDP-binding residues include Ser-281, Trp-333, Ala-334, His-351, Asn-355, Ser-356, and Glu-359. Gly-374 contributes to the an anthocyanidin binding site.

The protein belongs to the UDP-glycosyltransferase family. As to expression, expressed at low levels in stems and leaves. Expressed in ovaries.

It carries out the reaction cyanidin + UDP-alpha-D-galactose = cyanidin 3-O-beta-D-galactoside + UDP + H(+). It functions in the pathway pigment biosynthesis; anthocyanin biosynthesis. Involved in anthocyanin biosynthesis by catalyzing the galactosylation of cyanidin. Required for the accumulation of anthocyanin in red-fleshed kiwifruit varieties. Seems to be the key enzyme regulating the accumulation of anthocyanin in red-fleshed kiwi fruits. This Actinidia chinensis var. chinensis (Chinese soft-hair kiwi) protein is Anthocyanidin 3-O-galactosyltransferase F3GT1.